We begin with the raw amino-acid sequence, 303 residues long: MSTTDSGFVLYHYTPSKAAAIVFVVLFIIMTVIFAVQTLYAARKSSKALKNNPFESSDDKVDSLEDAEYKQLKITPTVFAFIPFFTGCIMEAVGYIGRALSSSNPERTTPYIIQSVLLLVAPALIAATIYMIFGRLLHVMRCQSLILISARFGTTFFVVGDVFSFFLQAAGGGLMSKAGSTKTGSGLITAGLFVQVIFFGFFIINEIRFTVNVKRRCLFYEDISRKWIFVNATLLLSSMLILLRSIVRIVEFIQGFNGYIISHEYFIYVFDAVPMLLVIIAFSVGSFFGNVFDVIKECQTLSN.

At 1-18 (MSTTDSGFVLYHYTPSKA) the chain is on the extracellular side. A helical transmembrane segment spans residues 19-39 (AAIVFVVLFIIMTVIFAVQTL). The Cytoplasmic segment spans residues 40-76 (YAARKSSKALKNNPFESSDDKVDSLEDAEYKQLKITP). The chain crosses the membrane as a helical span at residues 77–97 (TVFAFIPFFTGCIMEAVGYIG). Over 98-111 (RALSSSNPERTTPY) the chain is Extracellular. A helical membrane pass occupies residues 112-132 (IIQSVLLLVAPALIAATIYMI). Topologically, residues 133–154 (FGRLLHVMRCQSLILISARFGT) are cytoplasmic. A helical transmembrane segment spans residues 155 to 175 (TFFVVGDVFSFFLQAAGGGLM). The Extracellular segment spans residues 176 to 183 (SKAGSTKT). A helical membrane pass occupies residues 184-204 (GSGLITAGLFVQVIFFGFFII). Residues 205–226 (NEIRFTVNVKRRCLFYEDISRK) are Cytoplasmic-facing. Residues 227–247 (WIFVNATLLLSSMLILLRSIV) form a helical membrane-spanning segment. At 248 to 264 (RIVEFIQGFNGYIISHE) the chain is on the extracellular side. Residues 265–285 (YFIYVFDAVPMLLVIIAFSVG) form a helical membrane-spanning segment. Over 286–303 (SFFGNVFDVIKECQTLSN) the chain is Cytoplasmic.

Belongs to the lipid-translocating exporter (LTE) (TC 9.A.26.1) family. In terms of processing, N-glycosylated.

The protein resides in the cell membrane. Functionally, involved in inducible protoporphyrin IX influx and heme efflux. In Saccharomyces cerevisiae (strain ATCC 204508 / S288c) (Baker's yeast), this protein is Protoporphyrin uptake protein 1 (PUG1).